Reading from the N-terminus, the 434-residue chain is Serine hydroxymethyltransferase (434 aa).

Residues leucine 133 and 137–139 (GHL) each bind (6S)-5,6,7,8-tetrahydrofolate. Lysine 242 carries the N6-(pyridoxal phosphate)lysine modification.

It belongs to the SHMT family. As to quaternary structure, homodimer. Pyridoxal 5'-phosphate is required as a cofactor.

The protein resides in the cytoplasm. The enzyme catalyses (6R)-5,10-methylene-5,6,7,8-tetrahydrofolate + glycine + H2O = (6S)-5,6,7,8-tetrahydrofolate + L-serine. It functions in the pathway one-carbon metabolism; tetrahydrofolate interconversion. The protein operates within amino-acid biosynthesis; glycine biosynthesis; glycine from L-serine: step 1/1. Its function is as follows. Catalyzes the reversible interconversion of serine and glycine with tetrahydrofolate (THF) serving as the one-carbon carrier. This reaction serves as the major source of one-carbon groups required for the biosynthesis of purines, thymidylate, methionine, and other important biomolecules. Also exhibits THF-independent aldolase activity toward beta-hydroxyamino acids, producing glycine and aldehydes, via a retro-aldol mechanism. The polypeptide is Serine hydroxymethyltransferase (Caulobacter sp. (strain K31)).